A 429-amino-acid chain; its full sequence is Ribosomal RNA small subunit methyltransferase B (429 aa).

S-adenosyl-L-methionine contacts are provided by residues 254–260 (CAAPGGK), Asp277, Asp303, and Asp322. Residue Cys375 is the Nucleophile of the active site.

This sequence belongs to the class I-like SAM-binding methyltransferase superfamily. RsmB/NOP family.

It localises to the cytoplasm. The enzyme catalyses cytidine(967) in 16S rRNA + S-adenosyl-L-methionine = 5-methylcytidine(967) in 16S rRNA + S-adenosyl-L-homocysteine + H(+). Its function is as follows. Specifically methylates the cytosine at position 967 (m5C967) of 16S rRNA. This chain is Ribosomal RNA small subunit methyltransferase B, found in Escherichia coli O7:K1 (strain IAI39 / ExPEC).